Here is a 123-residue protein sequence, read N- to C-terminus: Large ribosomal subunit protein bL12 (123 aa).

Belongs to the bacterial ribosomal protein bL12 family. As to quaternary structure, homodimer. Part of the ribosomal stalk of the 50S ribosomal subunit. Forms a multimeric L10(L12)X complex, where L10 forms an elongated spine to which 2 to 4 L12 dimers bind in a sequential fashion. Binds GTP-bound translation factors.

Its function is as follows. Forms part of the ribosomal stalk which helps the ribosome interact with GTP-bound translation factors. Is thus essential for accurate translation. The protein is Large ribosomal subunit protein bL12 of Chlorobium phaeovibrioides (strain DSM 265 / 1930) (Prosthecochloris vibrioformis (strain DSM 265)).